The primary structure comprises 330 residues: ADP-L-glycero-D-manno-heptose-6-epimerase (330 aa).

NADP(+)-binding positions include 11–12 (FI), 32–33 (DD), Gln39, Gln54, 75–79 (QGACA), and Asn92. Tyr139 serves as the catalytic Proton acceptor. Lys143 is an NADP(+) binding site. Asn168 is a substrate binding site. Residues Val169 and Lys177 each contribute to the NADP(+) site. Residue Lys177 is the Proton acceptor of the active site. Substrate is bound by residues Arg179, His186, 200–203 (FGEH), Arg213, and Tyr292.

Belongs to the NAD(P)-dependent epimerase/dehydratase family. HldD subfamily. As to quaternary structure, homopentamer. It depends on NADP(+) as a cofactor.

The catalysed reaction is ADP-D-glycero-beta-D-manno-heptose = ADP-L-glycero-beta-D-manno-heptose. It participates in nucleotide-sugar biosynthesis; ADP-L-glycero-beta-D-manno-heptose biosynthesis; ADP-L-glycero-beta-D-manno-heptose from D-glycero-beta-D-manno-heptose 7-phosphate: step 4/4. Its function is as follows. Catalyzes the interconversion between ADP-D-glycero-beta-D-manno-heptose and ADP-L-glycero-beta-D-manno-heptose via an epimerization at carbon 6 of the heptose. The protein is ADP-L-glycero-D-manno-heptose-6-epimerase of Pseudomonas paraeruginosa (strain DSM 24068 / PA7) (Pseudomonas aeruginosa (strain PA7)).